The sequence spans 447 residues: Probable glycine dehydrogenase (decarboxylating) subunit 1 (447 aa).

This sequence belongs to the GcvP family. N-terminal subunit subfamily. The glycine cleavage system is composed of four proteins: P, T, L and H. In this organism, the P 'protein' is a heterodimer of two subunits.

The enzyme catalyses N(6)-[(R)-lipoyl]-L-lysyl-[glycine-cleavage complex H protein] + glycine + H(+) = N(6)-[(R)-S(8)-aminomethyldihydrolipoyl]-L-lysyl-[glycine-cleavage complex H protein] + CO2. Its function is as follows. The glycine cleavage system catalyzes the degradation of glycine. The P protein binds the alpha-amino group of glycine through its pyridoxal phosphate cofactor; CO(2) is released and the remaining methylamine moiety is then transferred to the lipoamide cofactor of the H protein. The polypeptide is Probable glycine dehydrogenase (decarboxylating) subunit 1 (Bacillus thuringiensis subsp. konkukian (strain 97-27)).